Reading from the N-terminus, the 189-residue chain is Large ribosomal subunit protein uL6 (189 aa).

It belongs to the universal ribosomal protein uL6 family. In terms of assembly, part of the 50S ribosomal subunit.

Functionally, this protein binds to the 23S rRNA, and is important in its secondary structure. It is located near the subunit interface in the base of the L7/L12 stalk, and near the tRNA binding site of the peptidyltransferase center. This Phocaeicola vulgatus (strain ATCC 8482 / DSM 1447 / JCM 5826 / CCUG 4940 / NBRC 14291 / NCTC 11154) (Bacteroides vulgatus) protein is Large ribosomal subunit protein uL6.